A 184-amino-acid polypeptide reads, in one-letter code: Photosystem I assembly protein Ycf4 (184 aa).

2 helical membrane-spanning segments follow: residues 22-42 (FCWAFILFLGSLGFLLVGTSS) and 57-77 (IIFFPQGIVMSFYGIAGLFIS).

This sequence belongs to the Ycf4 family.

It is found in the plastid. Its subcellular location is the chloroplast thylakoid membrane. In terms of biological role, seems to be required for the assembly of the photosystem I complex. The sequence is that of Photosystem I assembly protein Ycf4 from Olimarabidopsis pumila (Dwarf rocket).